Reading from the N-terminus, the 180-residue chain is NADH-quinone oxidoreductase subunit I (180 aa).

4Fe-4S ferredoxin-type domains follow at residues 50–80 (LTRDPDGEERCVACNLCAVACPVGCISLQKA) and 90–119 (EFFRVNFSRCIFCGFCEEACPTTAIQLTPD). 8 residues coordinate [4Fe-4S] cluster: cysteine 60, cysteine 63, cysteine 66, cysteine 70, cysteine 99, cysteine 102, cysteine 105, and cysteine 109.

Belongs to the complex I 23 kDa subunit family. As to quaternary structure, NDH-1 is composed of 13 different subunits. Subunits NuoA, H, J, K, L, M, N constitute the membrane sector of the complex. It depends on [4Fe-4S] cluster as a cofactor.

It is found in the cell inner membrane. The enzyme catalyses a quinone + NADH + 5 H(+)(in) = a quinol + NAD(+) + 4 H(+)(out). Its function is as follows. NDH-1 shuttles electrons from NADH, via FMN and iron-sulfur (Fe-S) centers, to quinones in the respiratory chain. The immediate electron acceptor for the enzyme in this species is believed to be ubiquinone. Couples the redox reaction to proton translocation (for every two electrons transferred, four hydrogen ions are translocated across the cytoplasmic membrane), and thus conserves the redox energy in a proton gradient. The sequence is that of NADH-quinone oxidoreductase subunit I from Pectobacterium atrosepticum (strain SCRI 1043 / ATCC BAA-672) (Erwinia carotovora subsp. atroseptica).